The primary structure comprises 642 residues: Threonine--tRNA ligase (642 aa).

One can recognise a TGS domain in the interval 1 to 61 (MPVIRFCDGS…TEDSSISFIS (61 aa)). The interval 243-534 (DHRKIGKLLN…LIEEFSGKLP (292 aa)) is catalytic. Residues C334, H385, and H511 each coordinate Zn(2+).

It belongs to the class-II aminoacyl-tRNA synthetase family. In terms of assembly, homodimer. Zn(2+) serves as cofactor.

The protein localises to the cytoplasm. It catalyses the reaction tRNA(Thr) + L-threonine + ATP = L-threonyl-tRNA(Thr) + AMP + diphosphate + H(+). Its function is as follows. Catalyzes the attachment of threonine to tRNA(Thr) in a two-step reaction: L-threonine is first activated by ATP to form Thr-AMP and then transferred to the acceptor end of tRNA(Thr). Also edits incorrectly charged L-seryl-tRNA(Thr). This is Threonine--tRNA ligase from Buchnera aphidicola subsp. Schizaphis graminum (strain Sg).